A 469-amino-acid chain; its full sequence is Calcium/calmodulin-dependent protein kinase type IV (469 aa).

2 positions are modified to phosphoserine; by autocatalysis: serine 11 and serine 12. The Protein kinase domain occupies 42 to 296 (FEVESELGRG…TFQALQHPWV (255 aa)). Residues 48 to 56 (LGRGATSIV) and lysine 71 contribute to the ATP site. A glycan (O-linked (GlcNAc) threonine) is linked at threonine 53. Serine 54 carries O-linked (GlcNAc) serine glycosylation. Residue serine 133 is glycosylated (O-linked (GlcNAc) serine). Catalysis depends on aspartate 160, which acts as the Proton acceptor. A glycan (O-linked (GlcNAc) serine) is linked at serine 185. Threonine 196 bears the Phosphothreonine mark. Residues 297–336 (TGKAANFVHMDTAQKKLQEFNARRKLKAAVKAVVASSRLG) are autoinhibitory domain. The segment at 302 to 319 (NFVHMDTAQKKLQEFNAR) is PP2A-binding. Residues 318 to 337 (ARRKLKAAVKAVVASSRLGS) form a calmodulin-binding region. A Phosphoserine; by autocatalysis modification is found at serine 332. The segment at 336 to 469 (GSASSSHTSI…PQQDAIQPEY (134 aa)) is disordered. The residue at position 337 (serine 337) is a Phosphoserine. Residues serine 340, serine 341, and serine 352 are each glycosylated (O-linked (GlcNAc) serine). A compositionally biased stretch (basic and acidic residues) spans 360-374 (DAKDSTDLLGKKMQE). Acidic residues predominate over residues 375–388 (EDQEEDQVEAEASA). Basic and acidic residues predominate over residues 389 to 409 (DEMRKLQSEEVEKDAGVKEEE). Residues 417–426 (DPEDELETDD) show a composition bias toward acidic residues. Over residues 427–441 (PEMKRDSEEKLKSVE) the composition is skewed to basic and acidic residues. Serine 433 and serine 439 each carry phosphoserine. Over residues 442–453 (EEMDPMTEEEAP) the composition is skewed to acidic residues.

This sequence belongs to the protein kinase superfamily. CAMK Ser/Thr protein kinase family. CaMK subfamily. In terms of assembly, monomer. Interacts with protein phosphatase 2A (PPP2CA/PPP2CB); the interaction is mutually exclusive with binding to Ca(2+)/calmodulin. Post-translationally, phosphorylated by CaMKK1 and CaMKK2 on Thr-196. Dephosphorylated by protein phosphatase 2A. Autophosphorylated on Ser-11 and Ser-12. In terms of processing, glycosylation at Ser-185 modulates the phosphorylation of CaMK4 at Thr-196 and negatively regulates its activity toward CREB1 in basal conditions and during early inomycin stimulation. Expressed in brain and testis.

The protein resides in the cytoplasm. It localises to the nucleus. It carries out the reaction L-seryl-[protein] + ATP = O-phospho-L-seryl-[protein] + ADP + H(+). It catalyses the reaction L-threonyl-[protein] + ATP = O-phospho-L-threonyl-[protein] + ADP + H(+). Its activity is regulated as follows. Activated by Ca(2+)/calmodulin. Binding of calmodulin results in conformational change that relieves intrasteric autoinhibition and allows phosphorylation of Thr-196 within the activation loop by CaMKK1 or CaMKK2. Phosphorylation of Thr-196 results in a 10-20-fold increase in total activity to generate Ca(2+)/calmodulin-independent activity. Autophosphorylation of the N-terminus Ser-11 and Ser-12 is required for full activation. Inactivated by protein phosphatase 2A (PPP2CA/PPP2CB) which dephosphorylates Thr-196, thereby terminating autonomous activity and helping to maintain the enzyme in its autoinhibited state. Functionally, calcium/calmodulin-dependent protein kinase that operates in the calcium-triggered CaMKK-CaMK4 signaling cascade and regulates, mainly by phosphorylation, the activity of several transcription activators, such as CREB1, MEF2D, JUN and RORA, which play pivotal roles in immune response, inflammation, and memory consolidation. In the thymus, regulates the CD4(+)/CD8(+) double positive thymocytes selection threshold during T-cell ontogeny. In CD4 memory T-cells, is required to link T-cell antigen receptor (TCR) signaling to the production of IL2, IFNG and IL4 (through the regulation of CREB and MEF2). Regulates the differentiation and survival phases of osteoclasts and dendritic cells (DCs). Mediates DCs survival by linking TLR4 and the regulation of temporal expression of BCL2. Phosphorylates the transcription activator CREB1 on 'Ser-133' in hippocampal neuron nuclei and contribute to memory consolidation and long term potentiation (LTP) in the hippocampus. Can activate the MAP kinases MAPK1/ERK2, MAPK8/JNK1 and MAPK14/p38 and stimulate transcription through the phosphorylation of ELK1 and ATF2. Can also phosphorylate in vitro CREBBP, PRM2, MEF2A and STMN1/OP18. May be involved in spermatogenesis. This chain is Calcium/calmodulin-dependent protein kinase type IV (Camk4), found in Mus musculus (Mouse).